A 281-amino-acid chain; its full sequence is Probable endonuclease 4 (281 aa).

Zn(2+) is bound by residues His69, His109, Glu145, Asp179, His182, His216, Asp229, His231, and Glu261.

Belongs to the AP endonuclease 2 family. Zn(2+) serves as cofactor.

It carries out the reaction Endonucleolytic cleavage to 5'-phosphooligonucleotide end-products.. Functionally, endonuclease IV plays a role in DNA repair. It cleaves phosphodiester bonds at apurinic or apyrimidinic (AP) sites, generating a 3'-hydroxyl group and a 5'-terminal sugar phosphate. This Chlorobaculum tepidum (strain ATCC 49652 / DSM 12025 / NBRC 103806 / TLS) (Chlorobium tepidum) protein is Probable endonuclease 4.